The chain runs to 348 residues: D-erythrose-4-phosphate dehydrogenase (348 aa).

Residues 12–13 and Arg-81 contribute to the NAD(+) site; that span reads RI. Substrate is bound by residues 154-156, Arg-200, 213-214, and Arg-236; these read SCT and TK. Catalysis depends on Cys-155, which acts as the Nucleophile. NAD(+) is bound at residue Asn-318.

The protein belongs to the glyceraldehyde-3-phosphate dehydrogenase family. Epd subfamily. Homotetramer.

The protein localises to the cytoplasm. The catalysed reaction is D-erythrose 4-phosphate + NAD(+) + H2O = 4-phospho-D-erythronate + NADH + 2 H(+). Its pathway is cofactor biosynthesis; pyridoxine 5'-phosphate biosynthesis; pyridoxine 5'-phosphate from D-erythrose 4-phosphate: step 1/5. Its function is as follows. Catalyzes the NAD-dependent conversion of D-erythrose 4-phosphate to 4-phosphoerythronate. The sequence is that of D-erythrose-4-phosphate dehydrogenase from Salmonella paratyphi B (strain ATCC BAA-1250 / SPB7).